A 293-amino-acid polypeptide reads, in one-letter code: Bifunctional protein FolD (293 aa).

NADP(+)-binding positions include 165–167 (GRS), Thr194, and Val235.

Belongs to the tetrahydrofolate dehydrogenase/cyclohydrolase family. Homodimer.

It carries out the reaction (6R)-5,10-methylene-5,6,7,8-tetrahydrofolate + NADP(+) = (6R)-5,10-methenyltetrahydrofolate + NADPH. The enzyme catalyses (6R)-5,10-methenyltetrahydrofolate + H2O = (6R)-10-formyltetrahydrofolate + H(+). The protein operates within one-carbon metabolism; tetrahydrofolate interconversion. Catalyzes the oxidation of 5,10-methylenetetrahydrofolate to 5,10-methenyltetrahydrofolate and then the hydrolysis of 5,10-methenyltetrahydrofolate to 10-formyltetrahydrofolate. The sequence is that of Bifunctional protein FolD from Syntrophus aciditrophicus (strain SB).